The chain runs to 210 residues: MIKQPALAQEQYACVYAWLALLFFREVDDEGLIQLQSAEIADWLALLKRQPALAASVALLEQKIAALSLRQDAQLELAADFCGLFLMTDKKSALPYASQYPQQEPGMIKHLLLEAGMEVNDDFKEPADHLAIYLELLSHLHFSLGESFQQRRMNKLRQKTLSSLLEWLPEFTNNCLKHDPYGFYAALSQLLLAIVRFDDGKEDLSIVAAE.

Belongs to the TorD/DmsD family. TorD subfamily.

It is found in the cytoplasm. In terms of biological role, involved in the biogenesis of TorA. Acts on TorA before the insertion of the molybdenum cofactor and, as a result, probably favors a conformation of the apoenzyme that is competent for acquiring the cofactor. The sequence is that of Chaperone protein TorD from Salmonella choleraesuis (strain SC-B67).